A 396-amino-acid chain; its full sequence is Digeranylgeranylglycerophospholipid reductase (396 aa).

Residues G14, E33, C44, G45, G47, R100, A124, E162, D283, G295, and I296 each contribute to the FAD site. Positions 338 and 374 each coordinate a 2,3-bis-O-(geranylgeranyl)-sn-glycerol 1-phospholipid.

The protein belongs to the geranylgeranyl reductase family. DGGGPL reductase subfamily. Requires FAD as cofactor.

It catalyses the reaction 2,3-bis-O-(phytanyl)-sn-glycerol 1-phosphate + 8 NADP(+) = 2,3-bis-O-(geranylgeranyl)-sn-glycerol 1-phosphate + 8 NADPH + 8 H(+). The enzyme catalyses 2,3-bis-O-(phytanyl)-sn-glycerol 1-phosphate + 8 NAD(+) = 2,3-bis-O-(geranylgeranyl)-sn-glycerol 1-phosphate + 8 NADH + 8 H(+). It carries out the reaction a 2,3-bis-O-phytanyl-sn-glycerol 1-phospholipid + 8 A = a 2,3-bis-O-(geranylgeranyl)-sn-glycerol 1-phospholipid + 8 AH2. The catalysed reaction is CDP-2,3-bis-O-(geranylgeranyl)-sn-glycerol + 8 AH2 = CDP-2,3-bis-O-(phytanyl)-sn-glycerol + 8 A. It catalyses the reaction archaetidylserine + 8 AH2 = 2,3-bis-O-phytanyl-sn-glycero-3-phospho-L-serine + 8 A. It participates in membrane lipid metabolism; glycerophospholipid metabolism. Is involved in the reduction of 2,3-digeranylgeranylglycerophospholipids (unsaturated archaeols) into 2,3-diphytanylglycerophospholipids (saturated archaeols) in the biosynthesis of archaeal membrane lipids. Catalyzes the formation of archaetidic acid (2,3-di-O-phytanyl-sn-glyceryl phosphate) from 2,3-di-O-geranylgeranylglyceryl phosphate (DGGGP) via the hydrogenation of each double bond of the isoprenoid chains. Is also probably able to reduce double bonds of geranyl groups in CDP-2,3-bis-O-(geranylgeranyl)-sn-glycerol and archaetidylserine, thus acting at various stages in the biosynthesis of archaeal membrane lipids. The polypeptide is Digeranylgeranylglycerophospholipid reductase (Thermoplasma volcanium (strain ATCC 51530 / DSM 4299 / JCM 9571 / NBRC 15438 / GSS1)).